The primary structure comprises 326 residues: Adenosine receptor A1 (326 aa).

Residues 1-10 (MPPYISAFQA) are Extracellular-facing. Residues 11-33 (AYIGIEVLIALVSVPGNVLVIWA) form a helical membrane-spanning segment. The Cytoplasmic portion of the chain corresponds to 34–46 (VKVNQALRDATFC). The helical transmembrane segment at 47–69 (FIVSLAVADVAVGALVIPLAILI) threads the bilayer. Topologically, residues 70–80 (NIGPQTYFHTC) are extracellular. Residues cysteine 80 and cysteine 169 are joined by a disulfide bond. A helical membrane pass occupies residues 81–102 (LMVACPVLILTQSSILALLAIA). Over 103–123 (VDRYLRVKIPLRYKTVVTQRR) the chain is Cytoplasmic. A helical membrane pass occupies residues 124 to 146 (AAVAIAGCWILSLVVGLTPMFGW). Residues 147–176 (NNLSVVEQDWRANGSVGEPVIKCEFEKVIS) lie on the Extracellular side of the membrane. Asparagine 148 and asparagine 159 each carry an N-linked (GlcNAc...) asparagine glycan. A helical transmembrane segment spans residues 177-201 (MEYMVYFNFFVWVLPPLLLMVLIYL). The Cytoplasmic portion of the chain corresponds to 202-235 (EVFYLIRKQLNKKVSASSGDPQKYYGKELKIAKS). Residues 236–259 (LALILFLFALSWLPLHILNCITLF) form a helical membrane-spanning segment. Residues 260–267 (CPTCQKPS) are Extracellular-facing. The chain crosses the membrane as a helical span at residues 268 to 292 (ILIYIAIFLTHGNSAMNPIVYAFRI). Residues 293 to 326 (HKFRVTFLKIWNDHFRCQPKPPIDEDLPEEKAED) are Cytoplasmic-facing. Cysteine 309 is lipidated: S-palmitoyl cysteine.

The protein belongs to the G-protein coupled receptor 1 family. As to expression, widely expressed in brain and spinal cord.

It is found in the cell membrane. Receptor for adenosine. The activity of this receptor is mediated by G proteins which inhibit adenylyl cyclase. The protein is Adenosine receptor A1 (Adora1) of Rattus norvegicus (Rat).